A 213-amino-acid chain; its full sequence is MRMRHKPWADDYLAENSHIVISEPSQYKGKWHSVFGNDNPIHIEVGTGKGQFISGMALQNPDVNYIGIELFKSVIVTAVDKVKQTEAPNVKLLNINANMLSDVFADGEVDRVYLNFSDPWPKKRHEKRRLTNHAFLKKYEQVLGGKGAIHFKTDNRGLFEYSLTSFSEYGLVLTFVSLDLHQSDFEGNVMTEYEEKFAAKGQPIYRVEAEWRT.

Residues E44, E69, N96, and D118 each contribute to the S-adenosyl-L-methionine site. Residue D118 is part of the active site. K122 provides a ligand contact to substrate. Residues 124–129 (RHEKRR) form an interaction with RNA region. Substrate-binding positions include D154 and 191–194 (TEYE).

It belongs to the class I-like SAM-binding methyltransferase superfamily. TrmB family.

It catalyses the reaction guanosine(46) in tRNA + S-adenosyl-L-methionine = N(7)-methylguanosine(46) in tRNA + S-adenosyl-L-homocysteine. It functions in the pathway tRNA modification; N(7)-methylguanine-tRNA biosynthesis. Functionally, catalyzes the formation of N(7)-methylguanine at position 46 (m7G46) in tRNA. This is tRNA (guanine-N(7)-)-methyltransferase from Bacillus licheniformis (strain ATCC 14580 / DSM 13 / JCM 2505 / CCUG 7422 / NBRC 12200 / NCIMB 9375 / NCTC 10341 / NRRL NRS-1264 / Gibson 46).